The sequence spans 100 residues: NADH-quinone oxidoreductase subunit K 2 (100 aa).

Transmembrane regions (helical) follow at residues 2-22 (LAIE…TIGV), 29-49 (IVIF…FIAF), and 61-81 (FVFF…ALMI).

This sequence belongs to the complex I subunit 4L family. As to quaternary structure, NDH-1 is composed of 14 different subunits. Subunits NuoA, H, J, K, L, M, N constitute the membrane sector of the complex.

The protein localises to the cell inner membrane. It carries out the reaction a quinone + NADH + 5 H(+)(in) = a quinol + NAD(+) + 4 H(+)(out). NDH-1 shuttles electrons from NADH, via FMN and iron-sulfur (Fe-S) centers, to quinones in the respiratory chain. The immediate electron acceptor for the enzyme in this species is believed to be ubiquinone. Couples the redox reaction to proton translocation (for every two electrons transferred, four hydrogen ions are translocated across the cytoplasmic membrane), and thus conserves the redox energy in a proton gradient. The polypeptide is NADH-quinone oxidoreductase subunit K 2 (Citrifermentans bemidjiense (strain ATCC BAA-1014 / DSM 16622 / JCM 12645 / Bem) (Geobacter bemidjiensis)).